The chain runs to 379 residues: Cytokine receptor common subunit gamma (379 aa).

A signal peptide spans 1–22 (MLKPPLPLRSLLFLQLPLLGVG). At 23–269 (LNPKFLTPSG…ENIENPENPS (247 aa)) the chain is on the extracellular side. An intrachain disulfide couples Cys68 to Cys78. 3 N-linked (GlcNAc...) asparagine glycosylation sites follow: Asn77, Asn81, and Asn90. The cysteines at positions 109 and 122 are disulfide-linked. In terms of domain architecture, Fibronectin type-III spans 163 to 260 (APENLTLRNL…IHWGSNTSKE (98 aa)). N-linked (GlcNAc...) asparagine glycans are attached at residues Asn166 and Asn171. The WSXWS motif signature appears at 244 to 248 (WSDWS). Residues 270–290 (LFALEAVLIPLGSMGLIVSLI) traverse the membrane as a helical segment. Over 291–379 (CVYCWLERTM…PPCYTLKPEP (89 aa)) the chain is Cytoplasmic. The short motif at 299–307 (TMPRIPTLK) is the Box 1 motif element. Residue Thr305 is modified to Phosphothreonine. Residues 349 to 370 (PPKGGEGPGGSPCSQHSPYWAP) form a disordered region.

It belongs to the type I cytokine receptor family. Type 5 subfamily. As to quaternary structure, the gamma subunit is common to the IL2, IL4, IL7, IL15, IL21 and probably also the IL13 receptors. Interacts with SHB upon interleukin stimulation.

It localises to the cell membrane. The protein localises to the cell surface. Common subunit for the receptors for a variety of interleukins. Probably in association with IL15RA, involved in the stimulation of neutrophil phagocytosis by IL15. This is Cytokine receptor common subunit gamma (IL2RG) from Bos taurus (Bovine).